The following is a 441-amino-acid chain: Damage-control phosphatase ARMT1 (441 aa).

Ala-2 carries the N-acetylalanine modification. Lys-40 carries the N6-acetyllysine modification. At Ser-102 the chain carries Phosphoserine. Asp-253 and Asn-254 together coordinate Mn(2+). 253–254 (DN) is a substrate binding site. S-adenosyl-L-methionine-binding residues include Glu-258 and Asp-291. Asp-291 is a Mn(2+) binding site. Residues 367 to 371 (DLNYR) and Lys-404 contribute to the substrate site. A Subfamily III RTxK motif motif is present at residues 401 to 404 (RTLK).

This sequence belongs to the damage-control phosphatase family. Sugar phosphate phosphatase III subfamily. Mn(2+) is required as a cofactor. The cofactor is Ni(2+). In terms of processing, automethylated.

The enzyme catalyses beta-D-fructose 1-phosphate + H2O = D-fructose + phosphate. The catalysed reaction is beta-D-fructose 6-phosphate = dihydroxyacetone + D-glyceraldehyde 3-phosphate. It catalyses the reaction L-glutamyl-[protein] + S-adenosyl-L-methionine = [protein]-L-glutamate 5-O-methyl ester + S-adenosyl-L-homocysteine. In terms of biological role, metal-dependent phosphatase that shows phosphatase activity against several substrates, including fructose-1-phosphate and fructose-6-phosphate. Its preference for fructose-1-phosphate, a strong glycating agent that causes DNA damage rather than a canonical yeast metabolite, suggests a damage-control function in hexose phosphate metabolism. Has also been shown to have O-methyltransferase activity that methylates glutamate residues of target proteins to form gamma-glutamyl methyl ester residues. Possibly methylates PCNA, suggesting it is involved in the DNA damage response. The protein is Damage-control phosphatase ARMT1 of Bos taurus (Bovine).